The primary structure comprises 367 residues: Cycloaraneosene synthase sdnA (367 aa).

Residues 1–24 (MSLYGLFTLATSYLPSVGGGAALA) form the signal peptide. Residues aspartate 115, asparagine 260, and serine 264 each contribute to the Mg(2+) site. A DDXXD motif motif is present at residues 115–119 (DDQFD). An N-linked (GlcNAc...) asparagine glycan is attached at asparagine 276.

This sequence belongs to the terpene synthase family. Mg(2+) serves as cofactor.

The catalysed reaction is (2E,6E,10E)-geranylgeranyl diphosphate = cycloaraneosene + diphosphate. It participates in antibiotic biosynthesis. In terms of biological role, cycloaraneosene synthase; part of the gene cluster that mediates the biosynthesis of sordarin and hypoxysordarin, glycoside antibiotics with a unique tetracyclic diterpene aglycone structure. First, the geranylgeranyl diphosphate synthase sdnC constructs GGDP from farnesyl diphosphate and isopentenyl diphosphate. The diterpene cyclase sdnA then catalyzes the cyclization of GGDP to afford cycloaraneosene. Cycloaraneosene is then hydroxylated four times by the putative cytochrome P450 monooxygenases sdnB, sdnE, sdnF and sdnH to give a hydroxylated cycloaraneosene derivative such as cycloaraneosene-8,9,13,19-tetraol. Although the order of the hydroxylations is unclear, at least C8, C9 and C13 of the cycloaraneosene skeleton are hydroxylated before the sordaricin formation. Dehydration of the 13-hydroxy group of the hydroxylated cycloaraneosene derivative might be catalyzed by an unassigned hypothetical protein such as sdnG and sdnP to construct the cyclopentadiene moiety. The FAD-dependent oxidoreductase sdnN is proposed to catalyze the oxidation at C9 of the hydroxylated cycloaraneosene derivative and also catalyze the Baeyer-Villiger oxidation to give the lactone intermediate. The presumed lactone intermediate would be hydrolyzed to give an acrolein moiety and a carboxylate moiety. Then, [4+2]cycloaddition would occur between the acrolein moiety and the cyclopentadiene moiety to give sordaricin. SdnN might also be involved in the [4+2]cycloaddition after the hypothesized oxidation to accommodate the oxidized product and prompt the [4+2]cycloaddition. GDP-6-deoxy-D-altrose may be biosynthesized from GDP-D-mannose by the putative GDP-mannose-4,6-dehydratase sdnI and the short-chain dehydrogenase sdnK. The glycosyltransferase sdnJ catalyzes the attachment of 6-deoxy-D-altrose onto the 19-hydroxy group of sordaricin to give 4'-O-demethylsordarin. The methyltransferase sdnD would complete the biosynthesis of sordarin. Sordarin can be further modified into hypoxysordarin. The unique acyl chain at the 3'-hydroxy group of hypoxysordarin would be constructed by an iterative type I PKS sdnO and the trans-acting polyketide methyltransferase sdnL. SdnL would be responsible for the introduction of an alpha-methyl group of the polyketide chain. Alternatively, the beta-lactamase-like protein sdnR might be responsible for the cleavage and transfer of the polyketide chain from the PKS sdnO to sordarin. Two putative cytochrome P450 monooxygenases, sdnQ and sdnT, might catalyze the epoxidations of the polyketide chain to complete the biosynthesis of hypoxysordarin. Transcriptional regulators sdnM and sdnS are presumably encoded for the transcriptional regulation of the expression of the sdn gene cluster. In Sordaria araneosa (Pleurage araneosa), this protein is Cycloaraneosene synthase sdnA.